Here is a 179-residue protein sequence, read N- to C-terminus: UPF0302 protein EF_1554 (179 aa).

The protein belongs to the UPF0302 family.

The polypeptide is UPF0302 protein EF_1554 (Enterococcus faecalis (strain ATCC 700802 / V583)).